The following is a 457-amino-acid chain: DDB1- and CUL4-associated factor 10 (457 aa).

WD repeat units follow at residues 65–104 (RTHGAVFNLEYSPDGSVLTVACEQTEVLLFDPVSSKHIKT), 108–146 (AHEDCVNNIRFLDNRMFATCSDDTTIALWDLRKLNSKVC), 150–189 (GHTSWVKNIEYDTNTRLLVTSGFDGNVIIWDTNRCTEDGC), and 195–234 (FHTRFLMRMRLTPDCSKMLISTSSGYLLILHELDLTKSLE). The segment covering 246-265 (TASTSDMTSTSSDTRPSSSP) has biased composition (low complexity). The disordered stretch occupies residues 246–304 (TASTSDMTSTSSDTRPSSSPCHNSDLGPLFEKHMSRSSQREGASPRNSLEVLTPEVPGE). Over residues 281–292 (RSSQREGASPRN) the composition is skewed to polar residues. WD repeat units follow at residues 306–346 (DRGN…QEGA), 368–406 (VGRGYIKELCFSPDGRMIASPYAYGIRLLGFDSQCKELV), and 424–457 (SHKDVVLTTKFSPTHCQIASGCLSGRVTLYQPKF).

It belongs to the WD repeat DCAF10 family.

It participates in protein modification; protein ubiquitination. May function as a substrate receptor for CUL4-DDB1 E3 ubiquitin-protein ligase complex. This is DDB1- and CUL4-associated factor 10 (dcaf10) from Xenopus tropicalis (Western clawed frog).